The chain runs to 2703 residues: Serine/arginine repetitive matrix protein 2 (2703 aa).

Methionine 1 is subject to N-acetylmethionine. The stretch at 60–92 forms a coiled coil; that stretch reads HERKRRVELRCLELEEMMEEQGYEEQQIQEKVA. The residue at position 101 (lysine 101) is an N6-acetyllysine. Residues lysine 108 and lysine 130 each participate in a glycyl lysine isopeptide (Lys-Gly) (interchain with G-Cter in SUMO2) cross-link. Residues 141–1007 form a disordered region; sequence ISDSYVDGSS…SGSFHLCPGV (867 aa). Tyrosine 145 carries the phosphotyrosine modification. At lysine 169 the chain carries N6-acetyllysine. Basic residues-rich tracts occupy residues 186 to 197 and 207 to 249; these read KQKKKKKKKDRG and RERK…KRSR. The interval 197–259 is sufficient for RNA-binding; sequence GRRSESSSPR…STTPAPKSRR (63 aa). A phosphoserine mark is found at serine 220 and serine 222. Low complexity predominate over residues 263–284; the sequence is STSADSASSSDTSRSRSRSAAA. 5 positions are modified to phosphoserine: serine 295, serine 300, serine 310, serine 322, and serine 323. Over residues 319 to 334 the composition is skewed to low complexity; the sequence is QQPSSPAPSTKQSSSP. The segment covering 335–345 has biased composition (basic and acidic residues); that stretch reads YEDKDKKEKSA. Residues serine 349, serine 351, serine 355, and serine 356 each carry the phosphoserine modification. Threonine 357 and threonine 365 each carry phosphothreonine. Residues serine 375, serine 385, serine 393, serine 396, serine 402, serine 406, serine 422, serine 433, serine 434, serine 435, serine 438, serine 452, serine 482, serine 484, serine 503, serine 505, serine 507, serine 531, serine 533, and serine 540 each carry the phosphoserine modification. Over residues 383 to 396 the composition is skewed to polar residues; the sequence is PSSQEPVNPSSEAS. The segment covering 425–437 has biased composition (polar residues); that stretch reads PTKGSRHASSSPE. A compositionally biased stretch (basic residues) spans 459–533; sequence NRSHGRAKRD…SPQRRGRSRS (75 aa). A compositionally biased stretch (low complexity) spans 534-543; it reads PQRPGWSRSR. Basic residues-rich tracts occupy residues 544-561, 568-721, and 730-740; these read NTQR…RSHS, GRSR…RRGR, and NKSRTSQRRSR. A phosphoserine mark is found at serine 700, serine 702, and serine 704. 3 positions are modified to phosphoserine: serine 773, serine 775, and serine 778. Over residues 785–817 the composition is skewed to low complexity; that stretch reads SQTPTRRSRSGSSPPKQKSKTPPRQSRSNSPQP. Residues serine 821 and serine 829 each carry the phosphoserine modification. Polar residues-rich tracts occupy residues 829–851 and 859–874; these read SVTN…SESS and RTPS…PRVK. Residues threonine 831 and threonine 841 each carry the phosphothreonine modification. Phosphoserine occurs at positions 846, 850, and 851. Composition is skewed to low complexity over residues 875–891 and 898–919; these read SSTP…SPQP and SPRG…TSRT. Phosphoserine is present on residues serine 882, serine 909, serine 924, serine 926, serine 928, serine 940, serine 942, serine 944, serine 945, serine 946, and serine 949. The residue at position 955 (threonine 955) is a Phosphothreonine. Residues 960–1000 are compositionally biased toward polar residues; it reads SGSTSPYLKSMLQTPPDQNLSGSKSPCPQKSRDSPTGSSGS. Serine 962 and serine 964 each carry phosphoserine. Tyrosine 966 is modified (phosphotyrosine). Position 973 is a phosphothreonine (threonine 973). A phosphoserine mark is found at serine 980, serine 984, and serine 993. At threonine 995 the chain carries Phosphothreonine. Phosphoserine occurs at positions 997, 1000, 1011, 1037, and 1038. Polar residues predominate over residues 1024–1057; that stretch reads VQQKGHTQTWPDTSSPEVMQTQVESPLLQSKSQT. The disordered stretch occupies residues 1024–1112; sequence VQQKGHTQTW…TKPDSSIYPL (89 aa). Phosphothreonine is present on threonine 1044. Residues serine 1048, serine 1064, serine 1066, serine 1067, and serine 1068 each carry the phosphoserine modification. Residues 1058 to 1068 show a composition bias toward low complexity; that stretch reads SPKGSLSRSSS. Threonine 1071 carries the post-translational modification Phosphothreonine. Phosphoserine occurs at positions 1077, 1087, 1094, 1097, 1117, 1151, 1159, 1175, 1188, 1216, 1225, 1229, 1230, 1269, 1276, 1278, 1284, 1287, 1294, 1305, 1325, 1338, 1339, 1340, 1343, 1359, and 1360. Residues 1079-1092 are compositionally biased toward basic and acidic residues; it reads VKQDKSEISTDPKL. The tract at residues 1136 to 2092 is disordered; sequence IQEDVASSCI…RSPGMLEPLG (957 aa). Positions 1146-1158 are enriched in basic and acidic residues; the sequence is PRDKFSPTQDRPE. Basic and acidic residues predominate over residues 1270 to 1284; it reads PEHKELSHSPPRENS. Positions 1285–1304 are enriched in polar residues; the sequence is FESSLEFKNSGPVSEVNTGF. Phosphothreonine is present on threonine 1370. The segment covering 1371–1387 has biased composition (basic and acidic residues); it reads PSRERSSSASPELKDGL. Phosphoserine is present on residues serine 1372, serine 1378, and serine 1380. Threonine 1390 bears the Phosphothreonine mark. The span at 1397-1408 shows a compositional bias: low complexity; it reads SGSSPGLRDGSG. Phosphoserine occurs at positions 1400 and 1407. Phosphothreonine is present on threonine 1409. The span at 1409–1431 shows a compositional bias: polar residues; it reads TPSRHSLSGSSPGMKDTPQTPSR. Residues serine 1414, serine 1416, serine 1418, and serine 1419 each carry the phosphoserine modification. Threonine 1428 carries the phosphothreonine modification. Residues serine 1438 and serine 1439 each carry the phosphoserine modification. Threonine 1448 is subject to Phosphothreonine. 5 positions are modified to phosphoserine: serine 1453, serine 1455, serine 1457, serine 1458, and serine 1465. Residues 1454–1468 are compositionally biased toward polar residues; sequence HSPSSPERNNKSVTP. Threonine 1467 carries the post-translational modification Phosphothreonine. Serine 1473, serine 1475, serine 1477, and serine 1478 each carry phosphoserine. Polar residues predominate over residues 1475–1489; the sequence is SESSVEQKNLARTSP. Phosphothreonine is present on threonine 1487. A compositionally biased stretch (low complexity) spans 1490 to 1499; it reads GQRSRSGSSQ. Residues serine 1493, serine 1495, serine 1497, serine 1498, and serine 1508 each carry the phosphoserine modification. Positions 1511-1523 are enriched in basic and acidic residues; sequence ERSESDSSPDSKP. Residues 1524 to 1533 are compositionally biased toward basic residues; that stretch reads KTRTPLRQRS. Serine 1533, serine 1535, serine 1537, serine 1538, serine 1554, serine 1556, serine 1557, serine 1572, serine 1576, serine 1577, serine 1604, serine 1614, serine 1647, serine 1649, and serine 1650 each carry phosphoserine. A compositionally biased stretch (low complexity) spans 1604–1613; sequence SPEGSSSSES. The segment covering 1637–1647 has biased composition (basic residues); it reads KSHTPPRRRSS. Phosphothreonine is present on threonine 1654. Residues serine 1683, serine 1685, serine 1687, serine 1688, serine 1718, and serine 1720 each carry the phosphoserine modification. 2 stretches are compositionally biased toward basic residues: residues 1725 to 1745 and 1754 to 1772; these read GLQR…RRRD and SRRR…RRRG. 6 positions are modified to phosphoserine: serine 1774, serine 1778, serine 1810, serine 1813, serine 1832, and serine 1834. A compositionally biased stretch (low complexity) spans 1776-1789; that stretch reads YHSRSPTRQESSRT. Over residues 1790–1810 the composition is skewed to basic residues; that stretch reads SSRRRRGRSRTPLTSRKRSRS. Basic residues predominate over residues 1818–2020; sequence KRSRSRASPA…PRAARGKRSL (203 aa). Threonine 1836 is modified (phosphothreonine). A phosphoserine mark is found at serine 1840 and serine 1846. Threonine 1848 is subject to Phosphothreonine. A phosphoserine mark is found at serine 1849, serine 1869, serine 1872, serine 1876, and serine 1878. Residues threonine 1880 and threonine 1884 each carry the phosphothreonine modification. Serine 1898 and serine 1900 each carry phosphoserine. A phosphothreonine mark is found at threonine 1902 and threonine 1906. Serine 1910 and serine 1912 each carry phosphoserine. 2 positions are modified to phosphothreonine: threonine 1914 and threonine 1918. Phosphoserine occurs at positions 1922, 1924, and 1927. At threonine 1930 the chain carries Phosphothreonine. 8 positions are modified to phosphoserine: serine 1936, serine 1939, serine 1948, serine 1951, serine 1960, serine 1963, serine 1970, and serine 1972. Position 1974 is a phosphothreonine (threonine 1974). Serine 1982 and serine 1984 each carry phosphoserine. Residue threonine 1986 is modified to Phosphothreonine. Phosphoserine is present on residues serine 1994, serine 1996, serine 1998, and serine 2019. Threonine 2021 is subject to Phosphothreonine. Residues 2022-2047 are compositionally biased toward low complexity; it reads RSPPAIRRRSASGSSSDRSRSATPPA. Serine 2023 and serine 2042 each carry phosphoserine. At threonine 2044 the chain carries Phosphothreonine. Phosphoserine occurs at positions 2052 and 2054. Threonine 2056 carries the post-translational modification Phosphothreonine. Over residues 2062-2076 the composition is skewed to low complexity; it reads SSSRMSCFSRPSMSP. Serine 2070, serine 2073, serine 2075, and serine 2084 each carry phosphoserine. Threonine 2096 is modified (phosphothreonine). Residues arginine 2146, arginine 2159, arginine 2183, and arginine 2198 each carry the omega-N-methylarginine modification. At serine 2224 the chain carries Phosphoserine. Omega-N-methylarginine is present on residues arginine 2226 and arginine 2240. Phosphothreonine is present on residues threonine 2241 and threonine 2254. Position 2262 is a phosphoserine (serine 2262). Residues 2263–2703 form a disordered region; sequence LTGSGTPPTA…SNRHRSSRSP (441 aa). Threonine 2268 and threonine 2281 each carry phosphothreonine. Residues 2269–2283 show a composition bias toward polar residues; the sequence is PPTAANYPSSSRTPQ. The residue at position 2295 (arginine 2295) is an Omega-N-methylarginine. 3 positions are modified to phosphoserine: serine 2296, serine 2321, and serine 2329. Threonine 2334 carries the phosphothreonine modification. The residue at position 2335 (serine 2335) is a Phosphoserine. The residue at position 2337 (arginine 2337) is an Asymmetric dimethylarginine; alternate. Arginine 2337 bears the Omega-N-methylarginine; alternate mark. Phosphoserine occurs at positions 2347, 2351, and 2360. Threonine 2362 is modified (phosphothreonine). A phosphoserine mark is found at serine 2365, serine 2368, serine 2381, serine 2384, serine 2404, and serine 2408. 2 stretches are compositionally biased toward polar residues: residues 2410-2443 and 2467-2476; these read FSDQ…SASD and TGAQQPSTLA. Positions 2487–2521 are enriched in low complexity; that stretch reads SSSSSSSSSSSSSSSSSSSSSSSSGSSSSDSEGSS. The residue at position 2535 (serine 2535) is a Phosphoserine. The residue at position 2537 (threonine 2537) is a Phosphothreonine. Lysine 2541 is covalently cross-linked (Glycyl lysine isopeptide (Lys-Gly) (interchain with G-Cter in SUMO2)). Threonine 2553 carries the post-translational modification Phosphothreonine. The span at 2562-2602 shows a compositional bias: low complexity; it reads SSSSSSSSSSSSSSSSSSSSSSSSSSSSSSSSSSSSSSSSS. Positions 2605–2622 are enriched in pro residues; sequence PAKPGPQALPKPASPKKP. Residues serine 2618, serine 2629, serine 2631, serine 2638, serine 2642, serine 2644, serine 2646, serine 2648, serine 2656, and serine 2660 each carry the phosphoserine modification. Over residues 2623–2643 the composition is skewed to basic and acidic residues; that stretch reads PPGERRSRSPRKPIDSLRDSR. Threonine 2689 is subject to Phosphothreonine. A Phosphoserine modification is found at serine 2691. Basic residues predominate over residues 2694 to 2703; sequence SNRHRSSRSP.

Belongs to the CWC21 family. Component of pre-catalytic, catalytic and post-catalytic spliceosome complexes. Found in a pre-mRNA splicing complex with SFRS4, SFRS5, SNRP70, SNRPA1, SRRM1 and SRRM2. Component of the minor spliceosome, which splices U12-type introns. Interacts with DHX8. Interacts with CACTIN.

It localises to the nucleus. Its subcellular location is the nucleus speckle. In terms of biological role, required for pre-mRNA splicing as component of the spliceosome. As a component of the minor spliceosome, involved in the splicing of U12-type introns in pre-mRNAs. This chain is Serine/arginine repetitive matrix protein 2 (Srrm2), found in Mus musculus (Mouse).